The sequence spans 200 residues: Prophage tail fiber assembly protein homolog TfaE (200 aa).

This sequence belongs to the tfa family.

In Escherichia coli (strain K12), this protein is Prophage tail fiber assembly protein homolog TfaE (tfaE).